Reading from the N-terminus, the 101-residue chain is Small ribosomal subunit protein eS24 (101 aa).

Belongs to the eukaryotic ribosomal protein eS24 family.

The protein is Small ribosomal subunit protein eS24 of Methanocaldococcus jannaschii (strain ATCC 43067 / DSM 2661 / JAL-1 / JCM 10045 / NBRC 100440) (Methanococcus jannaschii).